We begin with the raw amino-acid sequence, 94 residues long: Long neurotoxin LNTX1 (94 aa).

Positions 1–21 (MKILLLTLVVVTIMCLDLGYT) are cleaved as a signal peptide. 5 cysteine pairs are disulfide-bonded: cysteine 24–cysteine 43, cysteine 36–cysteine 64, cysteine 49–cysteine 53, cysteine 68–cysteine 79, and cysteine 80–cysteine 85.

It belongs to the three-finger toxin family. Long-chain subfamily. Type II alpha-neurotoxin sub-subfamily. As to quaternary structure, monomer. In terms of tissue distribution, expressed by the venom gland.

It localises to the secreted. Functionally, binds with high affinity to muscular (alpha-1/CHRNA1) and neuronal (alpha-7/CHRNA7) nicotinic acetylcholine receptor (nAChR) and inhibits acetylcholine from binding to the receptor, thereby impairing neuromuscular and neuronal transmission. Recombinant LNTX1 leads to a functional block of the muscle-type acetylcholine receptors. Has a cytotoxic activity. The protein is Long neurotoxin LNTX1 of Ophiophagus hannah (King cobra).